A 282-amino-acid chain; its full sequence is Acetyl-coenzyme A carboxylase carboxyl transferase subunit beta (282 aa).

The 254-residue stretch at 29–282 (LPINCPSCSA…LSSLLGLHQG (254 aa)) folds into the CoA carboxyltransferase N-terminal domain. 4 residues coordinate Zn(2+): Cys-33, Cys-36, Cys-52, and Cys-55. The segment at 33–55 (CPSCSARIAAEALQRNLKVCPKC) adopts a C4-type zinc-finger fold.

The protein belongs to the AccD/PCCB family. In terms of assembly, acetyl-CoA carboxylase is a heterohexamer composed of biotin carboxyl carrier protein (AccB), biotin carboxylase (AccC) and two subunits each of ACCase subunit alpha (AccA) and ACCase subunit beta (AccD). The cofactor is Zn(2+).

It is found in the cytoplasm. It catalyses the reaction N(6)-carboxybiotinyl-L-lysyl-[protein] + acetyl-CoA = N(6)-biotinyl-L-lysyl-[protein] + malonyl-CoA. It functions in the pathway lipid metabolism; malonyl-CoA biosynthesis; malonyl-CoA from acetyl-CoA: step 1/1. In terms of biological role, component of the acetyl coenzyme A carboxylase (ACC) complex. Biotin carboxylase (BC) catalyzes the carboxylation of biotin on its carrier protein (BCCP) and then the CO(2) group is transferred by the transcarboxylase to acetyl-CoA to form malonyl-CoA. The chain is Acetyl-coenzyme A carboxylase carboxyl transferase subunit beta from Syntrophomonas wolfei subsp. wolfei (strain DSM 2245B / Goettingen).